The chain runs to 645 residues: Homeobox protein B-H2 (645 aa).

Disordered regions lie at residues 1–50 (MTTM…TTAT), 86–134 (SSGG…QAAL), 149–176 (RERE…AHHP), 240–259 (SHLS…HDER), 265–385 (MLQQ…KART), and 553–645 (GAQQ…ALEV). The span at 18-29 (SAPSATAHHPAA) shows a compositional bias: low complexity. Basic residues predominate over residues 106 to 121 (QHHHHHQQQQQHHHHQ). Residues 122 to 134 (QQQQQQQHQQAAL) show a composition bias toward low complexity. Basic and acidic residues predominate over residues 149–165 (REREREREREHYRERHS). Residues 244–253 (HQQHHPHLHH) show a composition bias toward basic residues. Over residues 275-316 (NNNNNNNNSSSASNNNNNNNNSASANSNIISGNSSSSNNNNG) the composition is skewed to low complexity. Gly residues predominate over residues 317–328 (SGNGNMLLGGPG). Positions 329–339 (SSISGDQASTI) are enriched in polar residues. Low complexity predominate over residues 362–377 (SSANGDSSSHLSLSLS). Positions 380 to 439 (QRKARTAFTDHQLQTLEKSFERQKYLSVQDRMELANKLELSDCQVKTWYQNRRTKWKRQT) form a DNA-binding region, homeobox. Residues 553–574 (GAQQQQQQPPAASRSPATSQSA) are compositionally biased toward low complexity. The span at 583–592 (TSSSSRQRLI) shows a compositional bias: polar residues. Thr-593 carries the post-translational modification Phosphothreonine. Positions 594 to 603 (PSPPLNPGSP) are enriched in pro residues. Phosphoserine occurs at positions 595 and 602. Basic and acidic residues predominate over residues 618–632 (DEERDIERERERERE). The span at 633-645 (RDEDDEEELALEV) shows a compositional bias: acidic residues.

It belongs to the Antp homeobox family. In terms of tissue distribution, B-H1 and B-H2 are abundant in the eye-antenna imaginal disk. Expressed in R1 and R6 cells throughout larval stage until 30 hours after puparium formation, at which time expression is seen in the anterior and posterior primary pigment cells. Coexpressed in embryonic glial cells, neurons of the CNS and PNS, most latitudinal anterior cells of the developing notum and the central circular region of the leg and antennal imaginal disk throughout larval development.

Its subcellular location is the nucleus. Its function is as follows. B-H1 and B-H2 are regulated by members of the wg signaling pathway; wg and dpp. B-H1 and B-H2 are coexpressed and functionally required in R1 and R6 receptor cells and primary pigment cells for normal eye development. Coexpression is also required for the fate determination of external sensory organs, formation of notal microchaetae, formation of presutural macrochaetae, antennal development and for distal leg morphogenesis; segmentation and specification of tarsal segments 3-5. This Drosophila melanogaster (Fruit fly) protein is Homeobox protein B-H2 (B-H2).